A 124-amino-acid chain; its full sequence is Small ribosomal subunit protein uS12 (124 aa).

Residues 1–22 are disordered; the sequence is MATVNQLVRKPRKRKVAKSDVP. D89 is modified (3-methylthioaspartic acid). Positions 99-124 are disordered; the sequence is RGSLDTSGVQNRKQGRSKYGTKRPKK. Residues 111 to 124 show a composition bias toward basic residues; the sequence is KQGRSKYGTKRPKK.

The protein belongs to the universal ribosomal protein uS12 family. Part of the 30S ribosomal subunit. Contacts proteins S8 and S17. May interact with IF1 in the 30S initiation complex.

With S4 and S5 plays an important role in translational accuracy. Functionally, interacts with and stabilizes bases of the 16S rRNA that are involved in tRNA selection in the A site and with the mRNA backbone. Located at the interface of the 30S and 50S subunits, it traverses the body of the 30S subunit contacting proteins on the other side and probably holding the rRNA structure together. The combined cluster of proteins S8, S12 and S17 appears to hold together the shoulder and platform of the 30S subunit. The protein is Small ribosomal subunit protein uS12 of Marinomonas sp. (strain MWYL1).